We begin with the raw amino-acid sequence, 390 residues long: Zinc transporter 7-B (390 aa).

The Cytoplasmic segment spans residues 1 to 37 (MLPLSIKDDEYKPPKFNLVRKVSGWIRSIFSDSTSRN). A helical membrane pass occupies residues 38–58 (LFCFLCLNLSFAFVELFYGIW). At 59-67 (SNSLGLISD) the chain is on the lumenal side. The helical transmembrane segment at 68 to 88 (SFHMFFDCTALLAGLAASVIS) threads the bilayer. Over 89–102 (RWKTNETFSYGYVR) the chain is Cytoplasmic. The chain crosses the membrane as a helical span at residues 103–123 (AEVLAGFVNGLFLIFTAFFIF). Over 124 to 140 (SEGIERALDTPEVHHER) the chain is Lumenal. A helical membrane pass occupies residues 141–161 (LLPVSIMGFLVNLIGIFVFQH). Positions 161–226 (HGGGHGHSHE…GHDHSHKHGH (66 aa)) are his-rich loop. At 162 to 250 (GGGHGHSHES…KGSSKQILEG (89 aa)) the chain is on the cytoplasmic side. A disordered region spans residues 166-243 (GHSHESGHGH…DEPPEENKGS (78 aa)). Residues 187-201 (GHSHSHGGGHGHSHG) show a composition bias toward basic residues. Basic and acidic residues-rich tracts occupy residues 202 to 218 (GGHEHGHSHGGGHEHGH) and 232 to 242 (CHDEPPEENKG). A helical transmembrane segment spans residues 251–271 (VFLHIVADALGSVGVIISTIL). Residues 272-276 (MQQYG) lie on the Lumenal side of the membrane. A helical membrane pass occupies residues 277 to 297 (LMIADPICSMLIALLIFVSVI). Residues 298–390 (PLLKQSIGIL…LYVQIDLAAM (93 aa)) lie on the Cytoplasmic side of the membrane.

Belongs to the cation diffusion facilitator (CDF) transporter (TC 2.A.4) family. SLC30A subfamily. Homooligomer.

It is found in the golgi apparatus membrane. Its subcellular location is the cytoplasmic vesicle. The protein localises to the golgi apparatus. The protein resides in the trans-Golgi network. It localises to the sarcoplasmic reticulum. It is found in the mitochondrion. The enzyme catalyses Zn(2+)(in) = Zn(2+)(out). In terms of biological role, zinc ion transporter mediating zinc entry from the cytosol into the lumen of organelles along the secretory pathway. By contributing to zinc ion homeostasis within the early secretory pathway, regulates the activation and folding of enzymes like alkaline phosphatases. The chain is Zinc transporter 7-B (slc30a7-b) from Xenopus laevis (African clawed frog).